A 1134-amino-acid polypeptide reads, in one-letter code: Spermatogenesis-associated protein 31C2 (1134 aa).

A helical transmembrane segment spans residues 23 to 43 (PWVLDIFLTLVFALGFFFLLL). Disordered regions lie at residues 54 to 87 (PPSP…NHSL), 115 to 243 (LEKG…LLTP), 477 to 504 (PGTS…EAQT), 524 to 561 (TPQN…DSGS), 727 to 807 (MPER…PTVP), 928 to 1007 (NMGH…PSIS), and 1111 to 1134 (AASS…IRDQ). The span at 59 to 87 (PKKRKRHLVSQRPAGRRGRPRGRMKNHSL) shows a compositional bias: basic residues. Residues 132–148 (VGKRTPDGASRSSHEPT) show a composition bias toward basic and acidic residues. The span at 185 to 201 (SSLSASQPPEPSLLLEH) shows a compositional bias: low complexity. The span at 204 to 235 (PEPPALFPHPPRTPDPLACSPPPPKGFTPPPL) shows a compositional bias: pro residues. Polar residues predominate over residues 489 to 504 (WQSSTSTGESSKEAQT). 2 stretches are compositionally biased toward polar residues: residues 773 to 794 (LTYS…SSRA) and 937 to 948 (PNCQGSCKSQSP). Residues 954–970 (HKRENSRKPNLEKHEEM) show a composition bias toward basic and acidic residues. Over residues 1111–1124 (AASSQQATLKNQSR) the composition is skewed to polar residues. A compositionally biased stretch (basic and acidic residues) spans 1125–1134 (PNRDRQIRDQ).

This sequence belongs to the SPATA31 family.

Its subcellular location is the membrane. May play a role in spermatogenesis. The protein is Spermatogenesis-associated protein 31C2 (SPATA31C2) of Homo sapiens (Human).